Reading from the N-terminus, the 258-residue chain is GPI alpha-1,4-mannosyltransferase I, stabilizing subunit (258 aa).

The N-terminal stretch at 1-21 is a signal peptide; the sequence is MAARVAAVRAAAWLLLGAATG. Over 22-230 the chain is Lumenal; the sequence is LTRGPAAAFT…PVGLTVHTSL (209 aa). An N-linked (GlcNAc...) asparagine glycan is attached at Asn-103. Residues 231–251 form a helical membrane-spanning segment; sequence VCSVTLLITILCSTLILVAVF. The Cytoplasmic segment spans residues 252-258; sequence KYGHFSL.

This sequence belongs to the PIGX family. As to quaternary structure, part of the glycosylphosphatidylinositol-mannosyltransferase I complex that is composed of PIGM and PIGX. Interacts with PIGM; PIGX stabilizes PIGM.

Its subcellular location is the endoplasmic reticulum membrane. The protein operates within glycolipid biosynthesis; glycosylphosphatidylinositol-anchor biosynthesis. Stabilizing subunit of the glycosylphosphatidylinositol-mannosyltransferase I complex which catalyzes the transfer of the first mannose, via an alpha-1,4 bond from a dolichol-phosphate-mannose (Dol-P-Man) to the glucosaminyl acyl phosphatidylinositol (GlcN-(acyl)PI) intermediate to generate alpha-D-Man-(1-&gt;4)-alpha-D-GlcN-(1-&gt;6)-(1-radyl,2-acyl-sn-glycero-3-phospho)-2-acyl-inositol and participates in the sixth step of the glycosylphosphatidylinositol-anchor biosynthesis. Probably acts by stabilizing the mannosyltransferase PIGM. This Homo sapiens (Human) protein is GPI alpha-1,4-mannosyltransferase I, stabilizing subunit.